Here is a 422-residue protein sequence, read N- to C-terminus: MLQWRRRHCCFAKMTWNAKRSLFRTHLIGVLSLVFLFAMFLFFNHHDWLPGRAGFKENPVTYTFRGFRSTKSETNHSSLRNIWKETVPQTLRPQTATNSNNTDLSPQGVTGLENTLSANGSIYNEKGTGYPNSYHFKYIINEPEKCQEKSPFLILLIAAEPGQIEARRAIRQTWGNESLAPGIQITRIFLLGLSIKLNGYLQRAILEESRQYHDIIQQEYLDTYYNLTIKTLMGMNWVATYCPHIPYVMKTDSDMFVNTEYLINKLLKPDLPPRHNYFTGYLMRGYAPNRNKDSKWYMPPDLYPSERYPVFCSGTGYVFSGDLAEKIFKVSLGIRRLHLEDVYVGICLAKLRIDPVPPPNEFVFNHWRVSYSSCKYSHLITSHQFQPSELIKYWNHLQQNKHNACANAAKEKAGRYRHRKLH.

Topologically, residues 1–24 are cytoplasmic; the sequence is MLQWRRRHCCFAKMTWNAKRSLFR. Residues 25 to 45 form a helical; Signal-anchor for type II membrane protein membrane-spanning segment; sequence THLIGVLSLVFLFAMFLFFNH. At 46–422 the chain is on the lumenal side; the sequence is HDWLPGRAGF…AGRYRHRKLH (377 aa). N-linked (GlcNAc...) asparagine glycosylation is found at N75, N100, N119, N176, and N226. Residues 90-110 are disordered; sequence TLRPQTATNSNNTDLSPQGVT.

This sequence belongs to the glycosyltransferase 31 family. It depends on Mn(2+) as a cofactor.

The protein localises to the golgi apparatus membrane. It carries out the reaction an N-acetyl-beta-D-glucosaminyl derivative + UDP-alpha-D-galactose = a beta-D-galactosyl-(1-&gt;3)-N-acetyl-beta-D-glucosaminyl derivative + UDP + H(+). The catalysed reaction is a beta-D-GlcNAc-(1-&gt;3)-beta-D-Gal-(1-&gt;4)-beta-D-Glc-(1&lt;-&gt;1)-Cer(d18:1(4E)) + UDP-alpha-D-galactose = a beta-D-Gal-(1-&gt;3)-beta-D-GlcNAc-(1-&gt;3)-beta-D-Gal-(1-&gt;4)-beta-D-Glc-(1&lt;-&gt;1')-Cer(d18:1(4E)) + UDP + H(+). The enzyme catalyses a neolactoside IV(3)-beta-GlcNAc-nLc4Cer(d18:1(4E)) + UDP-alpha-D-galactose = a neolactoside IV(3)-beta-[Gal-beta-(1-&gt;3)-GlcNAc]-nLc4Cer(d18:1(4E)) + UDP + H(+). It functions in the pathway protein modification; protein glycosylation. Its function is as follows. Beta-1,3-galactosyltransferase that transfers galactose from UDP-galactose to substrates with a terminal beta-N-acetylglucosamine (beta-GlcNAc) residue. Can also utilize substrates with a terminal galactose residue, albeit with lower efficiency. Involved in the biosynthesis of the carbohydrate moieties of glycolipids and glycoproteins. Inactive towards substrates with terminal alpha-N-acetylglucosamine (alpha-GlcNAc) or alpha-N-acetylgalactosamine (alpha-GalNAc) residues. This chain is Beta-1,3-galactosyltransferase 2 (B3GALT2), found in Pongo abelii (Sumatran orangutan).